The chain runs to 317 residues: Serpentine receptor class delta-44 (317 aa).

A run of 6 helical transmembrane segments spans residues 5–25, 90–110, 130–150, 185–205, 235–255, and 264–284; these read ILSVLNPTVFVLSLCFQIILI, MFHILQTSSLVSGLTVFLTTF, ILFISSIVLISAGCGILLVII, RVNGIIINGLVVIVPITCLLL, IFGHTLVYVPIFICSTISLIT, and FFIFVLPHLTTVIDPLLTMYF.

This sequence belongs to the nematode receptor-like protein srd family.

Its subcellular location is the membrane. This chain is Serpentine receptor class delta-44 (srd-44), found in Caenorhabditis elegans.